Here is a 459-residue protein sequence, read N- to C-terminus: Trigger factor (459 aa).

Residues 166–245 form the PPIase FKBP-type domain; that stretch reads GDFANIDLTA…VNSVKAEELP (80 aa).

This sequence belongs to the FKBP-type PPIase family. Tig subfamily.

The protein resides in the cytoplasm. The enzyme catalyses [protein]-peptidylproline (omega=180) = [protein]-peptidylproline (omega=0). In terms of biological role, involved in protein export. Acts as a chaperone by maintaining the newly synthesized protein in an open conformation. Functions as a peptidyl-prolyl cis-trans isomerase. The sequence is that of Trigger factor from Bifidobacterium longum (strain DJO10A).